Here is an 89-residue protein sequence, read N- to C-terminus: Small ribosomal subunit protein uS15 (89 aa).

This sequence belongs to the universal ribosomal protein uS15 family. As to quaternary structure, part of the 30S ribosomal subunit. Forms a bridge to the 50S subunit in the 70S ribosome, contacting the 23S rRNA.

In terms of biological role, one of the primary rRNA binding proteins, it binds directly to 16S rRNA where it helps nucleate assembly of the platform of the 30S subunit by binding and bridging several RNA helices of the 16S rRNA. Forms an intersubunit bridge (bridge B4) with the 23S rRNA of the 50S subunit in the ribosome. The protein is Small ribosomal subunit protein uS15 of Roseobacter denitrificans (strain ATCC 33942 / OCh 114) (Erythrobacter sp. (strain OCh 114)).